The following is a 91-amino-acid chain: Large ribosomal subunit protein uL22 (91 aa).

Belongs to the universal ribosomal protein uL22 family. As to quaternary structure, part of the 50S ribosomal subunit.

Functionally, this protein binds specifically to 23S rRNA; its binding is stimulated by other ribosomal proteins, e.g. L4, L17, and L20. It is important during the early stages of 50S assembly. It makes multiple contacts with different domains of the 23S rRNA in the assembled 50S subunit and ribosome. Its function is as follows. The globular domain of the protein is located near the polypeptide exit tunnel on the outside of the subunit, while an extended beta-hairpin is found that lines the wall of the exit tunnel in the center of the 70S ribosome. The sequence is that of Large ribosomal subunit protein uL22 (rplV) from Ash yellows phytoplasma.